The following is a 650-amino-acid chain: Epithelial sodium channel subunit beta (650 aa).

Over 1 to 95 (MLLHINPAYL…IICEGPKKKA (95 aa)) the chain is Cytoplasmic. The helical transmembrane segment at 96-116 (MWFLLTLLFTALVCWQWGIFI) threads the bilayer. The Extracellular portion of the chain corresponds to 117–542 (RTYLSWEVSV…GGQFGFWMGG (426 aa)). 5 cysteine pairs are disulfide-bonded: C143–C317, C229–C234, C241–C248, C294–C301, and C406–C458. Residue N244 is glycosylated (N-linked (GlcNAc...) asparagine). A glycan (N-linked (GlcNAc...) asparagine) is linked at N305. Residues 543-563 (SVLCLIEFGEIIIDFVWITII) traverse the membrane as a helical segment. The Cytoplasmic segment spans residues 564-650 (KLVALAKSLR…IESDSEGDAI (87 aa)). Positions 600-650 (FQPDTAPRSPNTGPYPNEQALPIPGTPPPNYDSLRLQPLDVIESDSEGDAI) are disordered. Positions 626-630 (PPPNY) match the PY motif; recruits WW domain-containing proteins and is thereby required for ubiquitination and inhibition of the channel by NEDD4 and NEDD4L motif. The segment covering 641–650 (IESDSEGDAI) has biased composition (acidic residues). 2 positions are modified to phosphoserine: S643 and S645.

Belongs to the amiloride-sensitive sodium channel (TC 1.A.6) family. SCNN1B subfamily. Component of the heterotrimeric epithelial sodium channel (ENaC) composed of an alpha/SCNN1A, a beta/SCNN1B and a gamma/SCNN1G subunit. An additional delta/SCNN1D subunit can replace the alpha/SCNN1A subunit to form an alternative channel with specific properties. Interacts with WWP1 (via WW domains). Interacts with WWP2 (via WW domains); inhibits the channel. Interacts with the full-length immature form of PCSK9 (pro-PCSK9). Interacts (N-glycosylated) with BPIFA1; the interaction is direct and inhibits the proteolytic processing of SCNN1A and SCNN1G and the activation of ENaC. In terms of processing, ubiquitinated. Can be ubiquitinated at multiple sites and undergo monoubiquitination and polyubiquitination. Ubiquitination by NEDD4 or NEDD4L inhibits the ENaC channel through endocytosis, intracellular retention and degradation of its individual subunits. However, some studies could not confirm the ubiquitination of this subunit of the ENaC. Phosphorylated on serine and threonine residues. Aldosterone and insulin increase the basal level of phosphorylation. Post-translationally, N-glycosylated. N-glycosylation is required for interaction with BPIFA1.

The protein localises to the apical cell membrane. Its subcellular location is the cytoplasmic vesicle membrane. It catalyses the reaction Na(+)(in) = Na(+)(out). With respect to regulation, originally identified and characterized by its inhibition by the diuretic drug amiloride. This is one of the three pore-forming subunits of the heterotrimeric epithelial sodium channel (ENaC), a critical regulator of sodium balance and fluid homeostasis. ENaC operates in epithelial tissues, where it mediates the electrodiffusion of sodium ions from extracellular fluid through the apical membrane of cells, with water following osmotically. It plays a key role in maintaining sodium homeostasis through electrogenic sodium reabsorption in the kidneys. Additionally, ENaC is essential for airway surface liquid homeostasis, which is crucial for proper mucus clearance. This chain is Epithelial sodium channel subunit beta, found in Pan troglodytes (Chimpanzee).